Reading from the N-terminus, the 107-residue chain is Ferredoxin 1 (107 aa).

2 consecutive 4Fe-4S ferredoxin-type domains span residues Thr-2–Pro-30 and Asn-31–Glu-60. [3Fe-4S] cluster contacts are provided by Cys-9 and Cys-17. Positions 21, 40, 43, and 46 each coordinate [4Fe-4S] cluster. Cys-50 serves as a coordination point for [3Fe-4S] cluster.

[4Fe-4S] cluster is required as a cofactor. [3Fe-4S] cluster serves as cofactor.

Ferredoxins are iron-sulfur proteins that transfer electrons in a wide variety of metabolic reactions. The sequence is that of Ferredoxin 1 from Stutzerimonas stutzeri (Pseudomonas stutzeri).